Here is a 514-residue protein sequence, read N- to C-terminus: HMG box-containing protein 1 (514 aa).

The disordered stretch occupies residues A150–N182. Residues W170–N182 are compositionally biased toward basic and acidic residues. The AXH domain maps to W203 to F345. Residues C434–W502 constitute a DNA-binding region (HMG box).

As to quaternary structure, binds TCF4. Binds RB1. Binds the second PAH repeat of SIN3A. Post-translationally, ubiquitinated by the CTLH E3 ubiquitin-protein ligase complex, leading to subsequent proteasomal degradation.

The protein localises to the nucleus. In terms of biological role, transcriptional repressor that binds to the promoter region of target genes. Plays a role in the regulation of the cell cycle and of the Wnt pathway. Binds preferentially to the sequence 5'-TTCATTCATTCA-3'. Binding to the histone H1.0 promoter is enhanced by interaction with RB1. Disrupts the interaction between DNA and TCF4. The protein is HMG box-containing protein 1 (HBP1) of Pongo abelii (Sumatran orangutan).